Consider the following 386-residue polypeptide: Succinate--CoA ligase [ADP-forming] subunit beta (386 aa).

The ATP-grasp domain occupies 9 to 244 (KHILSRFGVS…YDEEIKEEIE (236 aa)). ATP-binding positions include Lys46, 53–55 (GRG), Glu99, Cys102, and Glu107. Asn199 and Asp213 together coordinate Mg(2+). Substrate contacts are provided by residues Asn264 and 320 to 322 (GIM).

This sequence belongs to the succinate/malate CoA ligase beta subunit family. As to quaternary structure, heterotetramer of two alpha and two beta subunits. Requires Mg(2+) as cofactor.

The enzyme catalyses succinate + ATP + CoA = succinyl-CoA + ADP + phosphate. It catalyses the reaction GTP + succinate + CoA = succinyl-CoA + GDP + phosphate. Its pathway is carbohydrate metabolism; tricarboxylic acid cycle; succinate from succinyl-CoA (ligase route): step 1/1. Its function is as follows. Succinyl-CoA synthetase functions in the citric acid cycle (TCA), coupling the hydrolysis of succinyl-CoA to the synthesis of either ATP or GTP and thus represents the only step of substrate-level phosphorylation in the TCA. The beta subunit provides nucleotide specificity of the enzyme and binds the substrate succinate, while the binding sites for coenzyme A and phosphate are found in the alpha subunit. This Ehrlichia canis (strain Jake) protein is Succinate--CoA ligase [ADP-forming] subunit beta.